The primary structure comprises 82 residues: Envelope small membrane protein (82 aa).

Residues 1–19 (MTFPRALTVIDDNGMVISI) are Virion surface-facing. The helical transmembrane segment at 20–40 (IFWFLLIIILILFSIALLNII) threads the bilayer. Residues 41–82 (KLCMVCCNLGRTVIIVPARHAYDAYKNFMQIRAYNPDEALLV) are Intravirion-facing.

It belongs to the alphacoronaviruses E protein family. As to quaternary structure, homopentamer. Interacts with membrane protein M in the budding compartment of the host cell, which is located between endoplasmic reticulum and the Golgi complex. Interacts with Nucleoprotein.

It is found in the host Golgi apparatus membrane. Functionally, plays a central role in virus morphogenesis and assembly. Acts as a viroporin and self-assembles in host membranes forming pentameric protein-lipid pores that allow ion transport. Also plays a role in the induction of apoptosis. In Canine coronavirus (strain Insavc-1) (CCoV), this protein is Envelope small membrane protein.